A 308-amino-acid chain; its full sequence is SAP30-binding protein (308 aa).

Residues 15–101 (AEYSDPESDG…EAEKRDPQEL (87 aa)) form a disordered region. Phosphoserine occurs at positions 18, 22, 43, and 52. A compositionally biased stretch (acidic residues) spans 57 to 78 (DEDGYEEEEDENSKQSEDDDSE). Residues 79-99 (TEKPEADDPKDNTEAEKRDPQ) are compositionally biased toward basic and acidic residues. Lysine 95 participates in a covalent cross-link: Glycyl lysine isopeptide (Lys-Gly) (interchain with G-Cter in SUMO2). The residue at position 113 (serine 113) is a Phosphoserine. Glycyl lysine isopeptide (Lys-Gly) (interchain with G-Cter in SUMO2) cross-links involve residues lysine 220, lysine 304, and lysine 305.

Belongs to the HCNGP family. Interacts with histone deacetylase complex subunit SAP30.

Its subcellular location is the nucleus. Plays a role in transcriptional repression by promoting histone deacetylase activity, leading to deacetylation of histone H3. May be involved in the regulation of beta-2-microglobulin genes. This chain is SAP30-binding protein (Sap30bp), found in Mus musculus (Mouse).